We begin with the raw amino-acid sequence, 667 residues long: Gamma-tubulin complex component 4 (667 aa).

The disordered stretch occupies residues 425–445 (HKADATQAREGPSRETSPREA).

Belongs to the TUBGCP family. As to quaternary structure, component of the gamma-tubulin ring complex (gTuRC) consisting of TUBGCP2, TUBGCP3, TUBGCP4, TUBGCP5 and TUBGCP6 and gamma-tubulin TUBG1 or TUBG2. TUBGCP2, TUBGCP3, TUBGCP4, TUBGCP5 and TUBGCP6 assemble in a 5:5:2:1:1 stoichiometry; each is associated with a gamma-tubulin, thereby arranging 14 gamma-tubulins in a helical manner. Gamma-tubulin at the first position is blocked by TUBGCP3 at the last position, allowing 13 protafilaments to grow into a microtubule. The gTuRC (via TUBGCP3 and TUBGCP6) interacts with ACTB and MZT1; the interactions form a luminal bridge that stabilizes the initial structure during complex assembly. The gTuRC (via TUBGCP2) interacts with MZT2A/MZT2B and CDK5RAP2 (via CM1 motif); the interactions play a role in gTuRC activation. Interacts with NINL. Interacts with ATF5; the ATF5:PCNT:polyglutamylated tubulin (PGT) tripartite unites the mother centriole and the pericentriolar material (PCM) in the centrosome. As to expression, ubiquitously expressed.

It localises to the cytoplasm. Its subcellular location is the cytoskeleton. The protein resides in the microtubule organizing center. The protein localises to the centrosome. Component of the gamma-tubulin ring complex (gTuRC) which mediates microtubule nucleation. The gTuRC regulates the minus-end nucleation of alpha-beta tubulin heterodimers that grow into microtubule protafilaments, a critical step in centrosome duplication and spindle formation. This is Gamma-tubulin complex component 4 (TUBGCP4) from Homo sapiens (Human).